The chain runs to 710 residues: DNA polymerase epsilon subunit B (710 aa).

Residues 116–167 are disordered; the sequence is FLKRPNSPTDTEITTLSQGSATSVVNPDSHSPMMLEEGSPINSDSEPISEHE. Polar residues predominate over residues 121–144; it reads NSPTDTEITTLSQGSATSVVNPDS.

Belongs to the DNA polymerase epsilon subunit B family. In terms of assembly, heterotetramer. Consists of four subunits: POL2, DPB2, DPB3 and DPB4.

The protein localises to the nucleus. Its function is as follows. As accessory component of the DNA polymerase epsilon (DNA polymerase II) participates in chromosomal DNA replication. The chain is DNA polymerase epsilon subunit B (DPB2) from Kluyveromyces lactis (strain ATCC 8585 / CBS 2359 / DSM 70799 / NBRC 1267 / NRRL Y-1140 / WM37) (Yeast).